The chain runs to 86 residues: UPF0367 protein PMN2A_1492 (86 aa).

It belongs to the UPF0367 family.

This is UPF0367 protein PMN2A_1492 from Prochlorococcus marinus (strain NATL2A).